Consider the following 814-residue polypeptide: Kinesin-like protein KIF6 (814 aa).

Residues T5 to I345 enclose the Kinesin motor domain. Residue G97 to T104 coordinates ATP. Coiled-coil stretches lie at residues N356 to E385, L456 to H494, and E588 to E683. The segment at L752–D788 is disordered. Over residues P759 to L771 the composition is skewed to polar residues.

Belongs to the TRAFAC class myosin-kinesin ATPase superfamily. Kinesin family.

It localises to the cytoplasm. It is found in the cytoskeleton. In Homo sapiens (Human), this protein is Kinesin-like protein KIF6 (KIF6).